The sequence spans 426 residues: DNA primase DnaG (426 aa).

The Toprim domain occupies 171–245 (DTVILVEGRA…KVDFVARAPP (75 aa)). Mg(2+)-binding residues include Glu177, Asp219, and Asp221. Residues 407-426 (KSEENIQESVSTGESAQTSP) are disordered. Residues 413–426 (QESVSTGESAQTSP) show a composition bias toward polar residues.

Belongs to the archaeal DnaG primase family. As to quaternary structure, forms a ternary complex with MCM helicase and DNA. Component of the archaeal exosome complex. Requires Mg(2+) as cofactor.

The catalysed reaction is ssDNA + n NTP = ssDNA/pppN(pN)n-1 hybrid + (n-1) diphosphate.. In terms of biological role, RNA polymerase that catalyzes the synthesis of short RNA molecules used as primers for DNA polymerase during DNA replication. Also part of the exosome, which is a complex involved in RNA degradation. Acts as a poly(A)-binding protein that enhances the interaction between heteromeric, adenine-rich transcripts and the exosome. This chain is DNA primase DnaG, found in Thermofilum pendens (strain DSM 2475 / Hrk 5).